The sequence spans 409 residues: Lactadherin (409 aa).

EGF-like domains are found at residues 2-41 and 44-88; these read SGDF…LICN and EKGP…IHCE. Cystine bridges form between cysteine 6–cysteine 17, cysteine 11–cysteine 29, and cysteine 31–cysteine 40. Asparagine 41 carries N-linked (GlcNAc...) asparagine glycosylation. 6 cysteine pairs are disulfide-bonded: cysteine 48-cysteine 59, cysteine 53-cysteine 76, cysteine 78-cysteine 87, cysteine 91-cysteine 247, cysteine 234-cysteine 238, and cysteine 252-cysteine 409. Residues 67–69 carry the Cell attachment site motif; the sequence is RGD. F5/8 type C domains lie at 91-247 and 252-409; these read CNAP…LLGC and CAEP…LLGC. Asparagine 372 is a glycosylation site (N-linked (GlcNAc...) asparagine).

As to expression, mammary epithelial cell surfaces and spermatozoan. Also present in testis, epididymis, uterus, adrenal gland, tonsil, muscle, heart, lymphatic gland, thymus and kidney but not spleen, liver, lung or brain.

It localises to the membrane. It is found in the secreted. The protein resides in the cytoplasmic vesicle. Its subcellular location is the secretory vesicle. The protein localises to the acrosome membrane. In terms of biological role, contributes to phagocytic removal of apoptotic cells in many tissues. Plays an important role in the maintenance of intestinal epithelial homeostasis and the promotion of mucosal healing. Promotes VEGF-dependent neovascularization. Specific ligand for the alpha-v/beta-3 and alpha-v/beta-5 receptors. Also binds to phosphatidylserine-enriched cell surfaces in a receptor-independent manner. Zona pellucida-binding protein which may play a role in gamete interaction. This Sus scrofa (Pig) protein is Lactadherin (MFGE8).